The chain runs to 199 residues: N-(5'-phosphoribosyl)anthranilate isomerase (199 aa).

This sequence belongs to the TrpF family.

The catalysed reaction is N-(5-phospho-beta-D-ribosyl)anthranilate = 1-(2-carboxyphenylamino)-1-deoxy-D-ribulose 5-phosphate. It functions in the pathway amino-acid biosynthesis; L-tryptophan biosynthesis; L-tryptophan from chorismate: step 3/5. This chain is N-(5'-phosphoribosyl)anthranilate isomerase, found in Campylobacter jejuni subsp. jejuni serotype O:6 (strain 81116 / NCTC 11828).